The following is a 654-amino-acid chain: Spindle assembly abnormal protein 6 homolog (654 aa).

The 53-residue stretch at 39-91 (VHRKDLVIRLTDDTDPFFLYNLVISEEDFQSLKLQQGLLVDFLAFPQKFIDLL) folds into the PISA domain. Residues 175–471 (TRQLHITQET…QLLKNNEKLI (297 aa)) are a coiled coil. The residue at position 509 (S509) is a Phosphoserine. Positions 568 to 589 (ASIDGQPGAAVNRPCSNDKENG) are disordered. At S612 the chain carries Phosphoserine. Positions 634–644 (SKPTVLPSSSS) are enriched in low complexity. Residues 634 to 654 (SKPTVLPSSSSAYFPGQLPSS) form a disordered region. Residue S654 is modified to Phosphoserine.

As to quaternary structure, nine homodimers form a cartwheel structure with an internal diameter of 23 nm and radial spokes connecting to the microtubule triplets. Forms a complex with CPAP and STIL. Interacts with FBXW5. Interacts with NUP62 and TUBG1 at the centrosome. Interacts with CENATAC; the interaction increases with CENATAC acetylation. Interacts with FZR1; the interaction is regulated by CENATAC and leads to SASS6 proteasomal degradation. In terms of processing, ubiquitinated by the SCF(FBXW5) E3 ubiquitin-protein ligase complex during S phase, leading to its degradation and preventing centriole reduplication. Ubiquitinated by the anaphase promoting complex/cyclosome (APC/C) E3 ubiquitin-protein ligase complex, leading to its degradation and preventing centriole reduplication.

Its subcellular location is the cytoplasm. It localises to the cytoskeleton. It is found in the microtubule organizing center. The protein resides in the centrosome. The protein localises to the centriole. Central scaffolding component of the centrioles ensuring their 9-fold symmetry. Required for centrosome biogenesis and duplication. Required both for mother-centriole-dependent centriole duplication and deuterosome-dependent centriole amplification in multiciliated cells. Not required for centriole formation in embryonic stem cells but necessary to maintain centriole architecture. Required for the recruitment of STIL to the procentriole and for STIL-mediated centriole amplification. The chain is Spindle assembly abnormal protein 6 homolog from Mus musculus (Mouse).